Consider the following 160-residue polypeptide: 6,7-dimethyl-8-ribityllumazine synthase (160 aa).

Residues phenylalanine 23, 61–63, and 85–87 contribute to the 5-amino-6-(D-ribitylamino)uracil site; these read SFE and AVI. 90–91 serves as a coordination point for (2S)-2-hydroxy-3-oxobutyl phosphate; the sequence is DT. Histidine 93 serves as the catalytic Proton donor. Position 118 (phenylalanine 118) interacts with 5-amino-6-(D-ribitylamino)uracil. Arginine 132 is a binding site for (2S)-2-hydroxy-3-oxobutyl phosphate.

The protein belongs to the DMRL synthase family.

It carries out the reaction (2S)-2-hydroxy-3-oxobutyl phosphate + 5-amino-6-(D-ribitylamino)uracil = 6,7-dimethyl-8-(1-D-ribityl)lumazine + phosphate + 2 H2O + H(+). It functions in the pathway cofactor biosynthesis; riboflavin biosynthesis; riboflavin from 2-hydroxy-3-oxobutyl phosphate and 5-amino-6-(D-ribitylamino)uracil: step 1/2. Catalyzes the formation of 6,7-dimethyl-8-ribityllumazine by condensation of 5-amino-6-(D-ribitylamino)uracil with 3,4-dihydroxy-2-butanone 4-phosphate. This is the penultimate step in the biosynthesis of riboflavin. In Synechococcus sp. (strain CC9311), this protein is 6,7-dimethyl-8-ribityllumazine synthase.